The following is a 426-amino-acid chain: Probable serine/threonine-protein kinase PBL2 (426 aa).

Positions 1 to 54 (MGNCLDSSAKVDNSNHSPHANSASSGSKVSSKTSRSTGPSGLSTTSYSTDSSFG) are disordered. Gly2 is lipidated: N-myristoyl glycine. The S-palmitoyl cysteine moiety is linked to residue Cys4. Residues 14–38 (SNHSPHANSASSGSKVSSKTSRSTG) are compositionally biased toward low complexity. The segment covering 39–52 (PSGLSTTSYSTDSS) has biased composition (polar residues). Thr75 is modified (phosphothreonine). One can recognise a Protein kinase domain in the interval 86 to 369 (FRQDNLLGEG…SEVLVTLEQL (284 aa)). ATP contacts are provided by residues 92–100 (LGEGGFGCV) and Lys124. Tyr169 bears the Phosphotyrosine mark. Residue Asp219 is the Proton acceptor of the active site. Ser253 carries the post-translational modification O-UMP-serine. Ser253 carries the phosphoserine modification. A phosphothreonine mark is found at Thr254 and Thr259. Position 254 is an O-UMP-threonine (Thr254). Tyr267 bears the Phosphotyrosine mark. The interval 374 to 426 (KPGTKHTQMESPRFHHSSVMQKSPVRYSHDRPLLHMTPGASPLPSYTQSPRVR) is disordered. The span at 417-426 (PSYTQSPRVR) shows a compositional bias: polar residues.

It belongs to the protein kinase superfamily. Ser/Thr protein kinase family. As to quaternary structure, interacts with FLS2. Interacts with the Xanthomonas campestris effector XopAC/AvrAC; the recognition of X.campestris effector XopAC/AvrAC requires the presence of RKS1 and RPP13L4/ZAR1. Component of a stable high-order oligomeric complex made of RKS1 and RPP13L4/ZAR1 which recruits X.campestris effector XopAC/AvrAC-mediated uridylylated PBL2 in the presence of ATP to form a wheel-like pentameric resistosome; this complex triggers immunity toward X.campestris in vascular tissues. Binds to RKS1 when uridylylated. Uridylylated at Ser-253 and Thr-254 by Xanthomonas campestris effector AvrAC/XopAC; this uridylylation is necessary for specific recruitment to RKS1 and to trigger immunity. As to expression, strongly expressed in leaves, moderately in roots, and barely in flowers, mostly in pedicels.

It is found in the cell membrane. The protein localises to the nucleus. The catalysed reaction is L-seryl-[protein] + ATP = O-phospho-L-seryl-[protein] + ADP + H(+). It catalyses the reaction L-threonyl-[protein] + ATP = O-phospho-L-threonyl-[protein] + ADP + H(+). Functionally, involved in disease resistance signaling. Contributes to pathogen-associated molecular pattern (PAMP)-triggered immunity (PTI) signaling and defense responses downstream of FLS2. Acts as a BIK1 decoy and enables Xanthomonas campestris AvrAC/XopAC detection; X.campestris effector AvrAC/XopAC-mediated uridylylation promotes the formation of a complex with RKS1 and RPP13L4/ZAR1 which, in turn, activates effector-triggered immunity (ETI) against X.campestris. Promotes, when uridylylated by AvrAC/XopAC, the release of ADP from the inactive RKS1-ZAR1 complex, thus activating the resistosome. In Arabidopsis thaliana (Mouse-ear cress), this protein is Probable serine/threonine-protein kinase PBL2.